Here is a 308-residue protein sequence, read N- to C-terminus: Electron transfer flavoprotein subunit alpha (308 aa).

252–280 (LYVAVGISGAIQHLAGMKDSKVIVAINKD) lines the FAD pocket.

This sequence belongs to the ETF alpha-subunit/FixB family. In terms of assembly, heterodimer of an alpha and a beta subunit. The cofactor is FAD.

Functionally, the electron transfer flavoprotein serves as a specific electron acceptor for other dehydrogenases. It transfers the electrons to the main respiratory chain via ETF-ubiquinone oxidoreductase (ETF dehydrogenase). In Paracoccus denitrificans, this protein is Electron transfer flavoprotein subunit alpha (etfA).